The chain runs to 325 residues: MSETATWQPSASIPNLLKRAAIMAEIRRFFADRGVLEVETPCMSQATVTDIHLFPFETRFVGPGHSQGINLYLMTSPEYHMKRLLAAGCGPVFQLCRSFRNEEMGRHHNPEFTMLEWYRPHYDMYRLMNEVDDLLQQVLDCQPAESLSYQQAFQRHLEIDPLSADKTQLREAAAKLDLSNIADTEEDRDTLLQLLFTMGVEPHIGKEKPTFIYHFPASQASLAQISTEDHRVAERFEVYYKGIELANGFHELTDAREQQQRFEQDNRKRAARGLPQQPIDQNLLDALAAGLPDCSGVALGIDRLVMLALGAESLADVIAFTVDRA.

76–78 (SPE) serves as a coordination point for substrate. ATP is bound by residues 100-102 (RNE) and Asn109. Tyr118 contacts substrate. An ATP-binding site is contributed by 244–245 (EL). Substrate is bound at residue Glu251. Residue Gly300 participates in ATP binding.

This sequence belongs to the class-II aminoacyl-tRNA synthetase family. EpmA subfamily. As to quaternary structure, homodimer.

It carries out the reaction D-beta-lysine + L-lysyl-[protein] + ATP = N(6)-((3R)-3,6-diaminohexanoyl)-L-lysyl-[protein] + AMP + diphosphate + H(+). In terms of biological role, with EpmB is involved in the beta-lysylation step of the post-translational modification of translation elongation factor P (EF-P) on 'Lys-34'. Catalyzes the ATP-dependent activation of (R)-beta-lysine produced by EpmB, forming a lysyl-adenylate, from which the beta-lysyl moiety is then transferred to the epsilon-amino group of EF-P 'Lys-34'. This Salmonella dublin (strain CT_02021853) protein is Elongation factor P--(R)-beta-lysine ligase.